A 287-amino-acid polypeptide reads, in one-letter code: Bifunctional protein FolD 1 (287 aa).

NADP(+) is bound by residues 170 to 172 and Ser-195; that span reads GRS.

This sequence belongs to the tetrahydrofolate dehydrogenase/cyclohydrolase family. Homodimer.

It catalyses the reaction (6R)-5,10-methylene-5,6,7,8-tetrahydrofolate + NADP(+) = (6R)-5,10-methenyltetrahydrofolate + NADPH. It carries out the reaction (6R)-5,10-methenyltetrahydrofolate + H2O = (6R)-10-formyltetrahydrofolate + H(+). Its pathway is one-carbon metabolism; tetrahydrofolate interconversion. In terms of biological role, catalyzes the oxidation of 5,10-methylenetetrahydrofolate to 5,10-methenyltetrahydrofolate and then the hydrolysis of 5,10-methenyltetrahydrofolate to 10-formyltetrahydrofolate. This is Bifunctional protein FolD 1 from Streptomyces avermitilis (strain ATCC 31267 / DSM 46492 / JCM 5070 / NBRC 14893 / NCIMB 12804 / NRRL 8165 / MA-4680).